The sequence spans 398 residues: Phosphoglycerate kinase (398 aa).

Substrate contacts are provided by residues 21-23, R36, 59-62, R119, and R157; these read DFN and HLGR. ATP contacts are provided by residues K208, G296, E327, and 354–357; that span reads GGDS.

It belongs to the phosphoglycerate kinase family. Monomer.

It is found in the cytoplasm. The catalysed reaction is (2R)-3-phosphoglycerate + ATP = (2R)-3-phospho-glyceroyl phosphate + ADP. It participates in carbohydrate degradation; glycolysis; pyruvate from D-glyceraldehyde 3-phosphate: step 2/5. This chain is Phosphoglycerate kinase, found in Streptococcus sanguinis (strain SK36).